The chain runs to 467 residues: Glutamate--tRNA ligase (467 aa).

Positions 10-20 (PSPTGYLHVGG) match the 'HIGH' region motif. Residues Cys-99, Cys-101, Cys-126, and Glu-128 each contribute to the Zn(2+) site. The 'KMSKS' region signature appears at 237 to 241 (RLSKR). Residue Lys-240 participates in ATP binding.

The protein belongs to the class-I aminoacyl-tRNA synthetase family. Glutamate--tRNA ligase type 1 subfamily. As to quaternary structure, monomer. Zn(2+) serves as cofactor.

Its subcellular location is the cytoplasm. It carries out the reaction tRNA(Glu) + L-glutamate + ATP = L-glutamyl-tRNA(Glu) + AMP + diphosphate. In terms of biological role, catalyzes the attachment of glutamate to tRNA(Glu) in a two-step reaction: glutamate is first activated by ATP to form Glu-AMP and then transferred to the acceptor end of tRNA(Glu). The chain is Glutamate--tRNA ligase from Geotalea uraniireducens (strain Rf4) (Geobacter uraniireducens).